The sequence spans 267 residues: Pro-opiomelanocortin (267 aa).

Positions 1–26 (MPRSCCSRSGALLLALLLQASMEVRG) are cleaved as a signal peptide. Cysteines 28 and 50 form a disulfide. O-linked (HexNAc...) threonine glycosylation occurs at T71. F87 carries the post-translational modification Phenylalanine amide. 3 disordered regions span residues 88–175 (GRRN…FPLE), 181–200 (TGQR…DGAG), and 222–241 (RMEH…GGFM). An N-linked (GlcNAc...) asparagine glycan is attached at N91. Residues 121–145 (PEPRSDGAKPGPREGKRSYSMEHFR) are compositionally biased toward basic and acidic residues. E134 bears the Glutamic acid 1-amide mark. S138 is subject to N-acetylserine; in Corticotropin. V150 bears the Valine amide mark. Phosphoserine is present on S168. A compositionally biased stretch (basic and acidic residues) spans 222–237 (RMEHFRWGSPPKDKRY).

It belongs to the POMC family. In terms of processing, specific enzymatic cleavages at paired basic residues yield the different active peptides. O-glycosylated; reducing sugar is probably N-acetylgalactosamine. In terms of tissue distribution, ACTH and MSH are produced by the pituitary gland.

It localises to the secreted. Functionally, stimulates the adrenal glands to release cortisol. Anorexigenic peptide. Increases the pigmentation of skin by increasing melanin production in melanocytes. In terms of biological role, increases the pigmentation of skin by increasing melanin production in melanocytes. Its function is as follows. Endogenous orexigenic opiate. Functionally, endogenous opiate. The sequence is that of Pro-opiomelanocortin (POMC) from Homo sapiens (Human).